A 166-amino-acid chain; its full sequence is Large ribosomal subunit protein uL10 (166 aa).

The protein belongs to the universal ribosomal protein uL10 family. Part of the ribosomal stalk of the 50S ribosomal subunit. The N-terminus interacts with L11 and the large rRNA to form the base of the stalk. The C-terminus forms an elongated spine to which L12 dimers bind in a sequential fashion forming a multimeric L10(L12)X complex.

Its function is as follows. Forms part of the ribosomal stalk, playing a central role in the interaction of the ribosome with GTP-bound translation factors. In Streptococcus gordonii (strain Challis / ATCC 35105 / BCRC 15272 / CH1 / DL1 / V288), this protein is Large ribosomal subunit protein uL10.